The following is a 161-amino-acid chain: uncharacterized protein (161 aa).

A run of 2 helical transmembrane segments spans residues 13–35 and 40–62; these read VAAV…PHAN and VFSA…PFIS.

Its subcellular location is the cell membrane. This is an uncharacterized protein from Archaeoglobus fulgidus (strain ATCC 49558 / DSM 4304 / JCM 9628 / NBRC 100126 / VC-16).